Reading from the N-terminus, the 429-residue chain is Glutamate-1-semialdehyde 2,1-aminomutase (429 aa).

Lys-267 carries the N6-(pyridoxal phosphate)lysine modification.

The protein belongs to the class-III pyridoxal-phosphate-dependent aminotransferase family. HemL subfamily. Homodimer. Pyridoxal 5'-phosphate serves as cofactor.

The protein resides in the cytoplasm. The catalysed reaction is (S)-4-amino-5-oxopentanoate = 5-aminolevulinate. The protein operates within porphyrin-containing compound metabolism; protoporphyrin-IX biosynthesis; 5-aminolevulinate from L-glutamyl-tRNA(Glu): step 2/2. The polypeptide is Glutamate-1-semialdehyde 2,1-aminomutase (Xanthomonas oryzae pv. oryzae (strain MAFF 311018)).